We begin with the raw amino-acid sequence, 226 residues long: X-linked lymphocyte-regulated protein 3C (226 aa).

The segment at 1 to 66 (MSSRKRKATD…QARKEKQDLV (66 aa)) is disordered. Basic and acidic residues predominate over residues 8–18 (ATDTAGRHSRM). Over residues 21-30 (NLSSDDSQNP) the composition is skewed to polar residues. Basic and acidic residues-rich tracts occupy residues 39-48 (EVLDAGREDI) and 56-66 (QQARKEKQDLV). A coiled-coil region spans residues 155–210 (ESLTLQKNRMEEFKSLCEKYLEKLEVLRDSRGNSIAEELRRLIATLEIKLLMLHNQ).

This sequence belongs to the XLR/SYCP3 family. Expressed in lymphoid cells.

The chain is X-linked lymphocyte-regulated protein 3C (Xlr3c) from Mus musculus (Mouse).